Here is a 929-residue protein sequence, read N- to C-terminus: Protocadherin gamma-B7 (929 aa).

The signal sequence occupies residues 1-30 (MGGSCAQRRRAGPRQVLFPLLLPLFYPTLC). 6 consecutive Cadherin domains span residues 31 to 133 (EPIR…APQF), 134 to 242 (QKDE…PPVF), 243 to 347 (SQDV…SPEI), 348 to 452 (IITS…APVF), 453 to 562 (GQSA…APRV), and 570 to 675 (DGSA…LPDF). Residues 31-691 (EPIRYSIPEE…SDSQAEMQFY (661 aa)) are Extracellular-facing. Asparagine 419 and asparagine 545 each carry an N-linked (GlcNAc...) asparagine glycan. The chain crosses the membrane as a helical span at residues 692–712 (LVVALALISVLFLLAVILAIA). The Cytoplasmic portion of the chain corresponds to 713–929 (LRLRQSFSPT…KKKSGKKEKK (217 aa)). Disordered stretches follow at residues 806-838 (QAPP…WPNN) and 899-929 (ATLT…KEKK). Residues 807–838 (APPNTDWRFSQAQRPGTSGSQNGDDTGTWPNN) are compositionally biased toward polar residues. Over residues 919–929 (NKKKSGKKEKK) the composition is skewed to basic residues.

Its subcellular location is the cell membrane. Potential calcium-dependent cell-adhesion protein. May be involved in the establishment and maintenance of specific neuronal connections in the brain. This is Protocadherin gamma-B7 (PCDHGB7) from Pan troglodytes (Chimpanzee).